A 247-amino-acid chain; its full sequence is Uridylate kinase (247 aa).

15–18 (KLSG) contacts ATP. An involved in allosteric activation by GTP region spans residues 23–28 (GEEGFG). Gly-57 contributes to the UMP binding site. 2 residues coordinate ATP: Gly-58 and Arg-62. Residues Asp-77 and 138–145 (TGNPFCTT) each bind UMP. ATP contacts are provided by Thr-165, Tyr-171, and Asp-174.

This sequence belongs to the UMP kinase family. In terms of assembly, homohexamer.

The protein resides in the cytoplasm. It carries out the reaction UMP + ATP = UDP + ADP. The protein operates within pyrimidine metabolism; CTP biosynthesis via de novo pathway; UDP from UMP (UMPK route): step 1/1. With respect to regulation, allosterically activated by GTP. Inhibited by UTP. Catalyzes the reversible phosphorylation of UMP to UDP. The polypeptide is Uridylate kinase (Shewanella loihica (strain ATCC BAA-1088 / PV-4)).